The sequence spans 375 residues: tRNA-specific 2-thiouridylase MnmA (375 aa).

ATP is bound by residues 12–19 (GMSGGVDS) and M38. The segment at 98–100 (NPD) is interaction with target base in tRNA. The active-site Nucleophile is the C103. A disulfide bridge connects residues C103 and C200. Residue G127 participates in ATP binding. The interval 150-152 (KDQ) is interaction with tRNA. The active-site Cysteine persulfide intermediate is the C200. The interval 312–313 (RY) is interaction with tRNA.

Belongs to the MnmA/TRMU family.

It is found in the cytoplasm. The catalysed reaction is S-sulfanyl-L-cysteinyl-[protein] + uridine(34) in tRNA + AH2 + ATP = 2-thiouridine(34) in tRNA + L-cysteinyl-[protein] + A + AMP + diphosphate + H(+). Catalyzes the 2-thiolation of uridine at the wobble position (U34) of tRNA, leading to the formation of s(2)U34. The chain is tRNA-specific 2-thiouridylase MnmA from Lactobacillus delbrueckii subsp. bulgaricus (strain ATCC BAA-365 / Lb-18).